Here is a 272-residue protein sequence, read N- to C-terminus: Troponin T, fast skeletal muscle (272 aa).

Positions 1-50 are enriched in acidic residues; that stretch reads MSDEETEQVEEQYEEEEEAQEEEVQEEAPEPEEVQEDAVAEEEREEDEEE. The disordered stretch occupies residues 1-75; it reads MSDEETEQVE…EKVDFDDIQK (75 aa). The residue at position 2 (serine 2) is an N-acetylserine. Serine 2 carries the phosphoserine modification. The span at 63 to 75 shows a compositional bias: basic and acidic residues; sequence PEGEKVDFDDIQK. Serine 91 is modified (phosphoserine). The span at 114–156 shows a compositional bias: basic and acidic residues; it reads RAERAEQQRIRAEKEREPQNRLAEEKARREEEDAKRRAEDDMK. The segment at 114 to 193 is disordered; it reads RAERAEQQRI…TAREMKKKIL (80 aa). Phosphoserine occurs at positions 162, 169, and 170. Residues 184 to 193 are compositionally biased toward basic and acidic residues; the sequence is TAREMKKKIL. Serine 206 is modified (phosphoserine). At tyrosine 222 the chain carries Phosphotyrosine. The interval 248-272 is disordered; that stretch reads RIDQAQKHSKKAGATAKGKVGGRWK.

The protein belongs to the troponin T family. Expressed predominantly in skeletal muscle.

In terms of biological role, troponin T is the tropomyosin-binding subunit of troponin, the thin filament regulatory complex which confers calcium-sensitivity to striated muscle actomyosin ATPase activity. The chain is Troponin T, fast skeletal muscle (Tnnt3) from Mus musculus (Mouse).